A 253-amino-acid polypeptide reads, in one-letter code: Zinc import ATP-binding protein ZnuC (253 aa).

The ABC transporter domain maps to 6–227; sequence VTLNKISVTF…FGNRGAEQLA (222 aa). 38 to 45 contributes to the ATP binding site; it reads GPNGAGKS.

Belongs to the ABC transporter superfamily. Zinc importer (TC 3.A.1.15.5) family. As to quaternary structure, the complex is composed of two ATP-binding proteins (ZnuC), two transmembrane proteins (ZnuB) and a solute-binding protein (ZnuA).

The protein resides in the cell inner membrane. The catalysed reaction is Zn(2+)(out) + ATP(in) + H2O(in) = Zn(2+)(in) + ADP(in) + phosphate(in) + H(+)(in). Part of the ABC transporter complex ZnuABC involved in zinc import. Responsible for energy coupling to the transport system. The sequence is that of Zinc import ATP-binding protein ZnuC from Yersinia pseudotuberculosis serotype I (strain IP32953).